Here is a 413-residue protein sequence, read N- to C-terminus: Divalent metal cation transporter MntH (413 aa).

The next 11 membrane-spanning stretches (helical) occupy residues 19–39 (FALMGPAFIAAIGYIDPGNFA), 49–69 (GYQLLWVVVWANVMAMVIQLM), 94–114 (VWFYWVQAEIIAMATDLAEFI), 122–142 (LVFGVTLLQGAMLTGVATFLI), 155–175 (LVIGGLLLFVAAAYVIELFFS), 196–216 (AVLLAAGVLGATIMPHVIYLH), 240–260 (VAIAMTIAGFVNLAMMATAAA), 287–307 (AAALVFGLSLLAAGLSSTVVG), 323–343 (IPLLLRRVITMLPSFIVILAG), 349–369 (ILVMSQVLLSFGIALALIPLL), and 393–413 (LIVVVVIALNGYLLVAMALNL).

Belongs to the NRAMP family.

The protein localises to the cell inner membrane. H(+)-stimulated, divalent metal cation uptake system. The chain is Divalent metal cation transporter MntH from Erwinia tasmaniensis (strain DSM 17950 / CFBP 7177 / CIP 109463 / NCPPB 4357 / Et1/99).